The chain runs to 541 residues: FAD-linked oxidoreductase pynB (541 aa).

An N-terminal signal peptide occupies residues 1 to 20 (MRLSARGFVWSALLACTASA). N-linked (GlcNAc...) asparagine glycosylation is found at asparagine 30, asparagine 57, asparagine 117, asparagine 131, asparagine 158, asparagine 253, asparagine 306, asparagine 343, asparagine 430, and asparagine 461. The FAD-binding PCMH-type domain maps to 71 to 242 (FNEFPALIAY…VDFDLQLMQF (172 aa)).

It belongs to the oxygen-dependent FAD-linked oxidoreductase family. FAD serves as cofactor.

It functions in the pathway secondary metabolite biosynthesis. In terms of biological role, FAD-linked oxidoreductase; part of the gene cluster that mediates the biosynthesis of pyranonigrins, a family of antioxidative compounds. The first step of pyranonigrins biosynthesis is performed by the hybrid PKS-NRPS synthetase that condenses 6 malonyl-CoA units to an acetyl starter unit, to form a 1,3,5-trioxotetradecane-6,8-dienyl-ACP. The enoyl reductase (ER) domain of pynA is likely to be functional during the first two rounds of polyketide chain extension, to generate the saturated C-C bonds of the alkyl side chain. PynA subsequently forms the amide bond between the acyl chain and L-serine. Although pynA has a terminal reductase domain, it appears to require the thioesterase pynI for the release of the straight-chain intermediate from pynA via the formation of a tetramic acid pyranonigrin J. The methyltransferase pynC then coverts pyranonigrin J to pyranonigrin I via N-methylation. The FAD-dependent monooxygenase pynG catalyzes an epoxidation-mediated cyclization to form the dihydro-gamma-pyrone moiety, followed by pynD-catalyzed oxidation of the alcohol to the ketone and enolization to yield the characteristic tetramic acid-fused gamma-pyrone core of pyranonigrin H. Pyranonigrin H is substrate of pynH for dehydration-mediated exo-methylene formation from the serine side chain to produce pyranonigrin E, before the oxidase pynE reduces the exo-methylene of pyranonigrin E into a pendant methyl to form pyranonigrin G. The FAD-linked oxidoreductase pynB performs the reverse reaction and converts pyranonigrin G back to pyranonigrin E. This is FAD-linked oxidoreductase pynB from Aspergillus niger (strain ATCC MYA-4892 / CBS 513.88 / FGSC A1513).